The primary structure comprises 304 residues: UDP-3-O-acyl-N-acetylglucosamine deacetylase (304 aa).

Positions 78, 237, and 241 each coordinate Zn(2+). H264 acts as the Proton donor in catalysis.

Belongs to the LpxC family. It depends on Zn(2+) as a cofactor.

It catalyses the reaction a UDP-3-O-[(3R)-3-hydroxyacyl]-N-acetyl-alpha-D-glucosamine + H2O = a UDP-3-O-[(3R)-3-hydroxyacyl]-alpha-D-glucosamine + acetate. The protein operates within glycolipid biosynthesis; lipid IV(A) biosynthesis; lipid IV(A) from (3R)-3-hydroxytetradecanoyl-[acyl-carrier-protein] and UDP-N-acetyl-alpha-D-glucosamine: step 2/6. In terms of biological role, catalyzes the hydrolysis of UDP-3-O-myristoyl-N-acetylglucosamine to form UDP-3-O-myristoylglucosamine and acetate, the committed step in lipid A biosynthesis. The sequence is that of UDP-3-O-acyl-N-acetylglucosamine deacetylase from Thioalkalivibrio sulfidiphilus (strain HL-EbGR7).